The sequence spans 155 residues: 6,7-dimethyl-8-ribityllumazine synthase (155 aa).

5-amino-6-(D-ribitylamino)uracil is bound by residues Phe-22, 56–58 (AFE), and 80–82 (AVI). Position 85–86 (85–86 (AT)) interacts with (2S)-2-hydroxy-3-oxobutyl phosphate. The Proton donor role is filled by His-88. Phe-113 is a binding site for 5-amino-6-(D-ribitylamino)uracil. Arg-127 contacts (2S)-2-hydroxy-3-oxobutyl phosphate.

Belongs to the DMRL synthase family.

It carries out the reaction (2S)-2-hydroxy-3-oxobutyl phosphate + 5-amino-6-(D-ribitylamino)uracil = 6,7-dimethyl-8-(1-D-ribityl)lumazine + phosphate + 2 H2O + H(+). It functions in the pathway cofactor biosynthesis; riboflavin biosynthesis; riboflavin from 2-hydroxy-3-oxobutyl phosphate and 5-amino-6-(D-ribitylamino)uracil: step 1/2. Functionally, catalyzes the formation of 6,7-dimethyl-8-ribityllumazine by condensation of 5-amino-6-(D-ribitylamino)uracil with 3,4-dihydroxy-2-butanone 4-phosphate. This is the penultimate step in the biosynthesis of riboflavin. This chain is 6,7-dimethyl-8-ribityllumazine synthase, found in Clostridium acetobutylicum (strain ATCC 824 / DSM 792 / JCM 1419 / IAM 19013 / LMG 5710 / NBRC 13948 / NRRL B-527 / VKM B-1787 / 2291 / W).